The primary structure comprises 142 residues: Galactose-6-phosphate isomerase subunit LacA (142 aa).

Belongs to the LacAB/RpiB family. As to quaternary structure, heteromultimeric protein consisting of LacA and LacB.

The catalysed reaction is aldehydo-D-galactose 6-phosphate = keto-D-tagatose 6-phosphate. It functions in the pathway carbohydrate metabolism; D-galactose 6-phosphate degradation; D-tagatose 6-phosphate from D-galactose 6-phosphate: step 1/1. The polypeptide is Galactose-6-phosphate isomerase subunit LacA (Staphylococcus aureus (strain JH9)).